Consider the following 460-residue polypeptide: MSIEQAKKLDECFPTYKEEFEIPTFKSLGIQNDEYEDSTDSIYLCGNSLGLMPKITRTAINDELNAWSERGVESHFRHPGEEKGLTSWVDIDLPLLPLIAPIVGGKENEVAVMGTLTSNLNAMLMSFYKPSGKKTKILFEKQAFPSDYYAFLNAAKIFGYNEDHLIQIEIKEGKTYIETEDIIETITNHQDELALVCFSGIQYYTGQFFNIGEITECAKSFGITVGWDLAHAVGNVPLQLHDWDVDFAVWCSYKYLNSGPGGIAGIFVHEKHTKDNSIEQFKPRLAGWWGNNASDRFKMLEVFDPIKSALSYRQSNPSVIDVVAVKSSLELFKKVGGISELRKKSVELTGFLQALLTSSKYYIKQEETTDRLGFKILSPLNKGDRGCQLSVLFQPHYEEYSKNIMERVNKYLSDHAIVCDERRPDVIRLAPLPLYNTFSETFIAVQRLIEAMDKIAANEI.

Pyridoxal 5'-phosphate is bound by residues Leu116, Thr117, 144-147 (FPSD), Ser199, Asp228, His231, and Tyr253. Lys254 is modified (N6-(pyridoxal phosphate)lysine). Pyridoxal 5'-phosphate-binding residues include Trp288 and Asn316.

The protein belongs to the kynureninase family. As to quaternary structure, homodimer. It depends on pyridoxal 5'-phosphate as a cofactor.

It localises to the cytoplasm. It carries out the reaction L-kynurenine + H2O = anthranilate + L-alanine + H(+). It catalyses the reaction 3-hydroxy-L-kynurenine + H2O = 3-hydroxyanthranilate + L-alanine + H(+). It participates in amino-acid degradation; L-kynurenine degradation; L-alanine and anthranilate from L-kynurenine: step 1/1. It functions in the pathway cofactor biosynthesis; NAD(+) biosynthesis; quinolinate from L-kynurenine: step 2/3. Its function is as follows. Catalyzes the cleavage of L-kynurenine (L-Kyn) and L-3-hydroxykynurenine (L-3OHKyn) into anthranilic acid (AA) and 3-hydroxyanthranilic acid (3-OHAA), respectively. The polypeptide is Kynureninase (Debaryomyces hansenii (strain ATCC 36239 / CBS 767 / BCRC 21394 / JCM 1990 / NBRC 0083 / IGC 2968) (Yeast)).